Consider the following 482-residue polypeptide: MSPQTETKASVGFKAGVKDYKLTYYTPEYQTLDTDILAAFRVTPQPGVPPEEAGAAVAAESSTGTWTTVWTDGLTSLDRYKGRCYHIDPVPGEENQYICYVAYPLDLFEEGSVTNMFTSIVGNVFGFKALRALRLEDLRIPVAYIKTFQGPPHGIQVERDKLNKYGRPLLGCTIKPKLGLSAKNYGRAVYECLRGGLDFTKDDENVNSQPFMRWRDRFLFCAEALYKAQAETGEIKGHYLNATAGTCEEMIKRAVFARELGVPIVMHDYLTGGFTANTSLAHYCRDNGLLLHIHRAMHAVIDRQKNHGMHFRVLAKALRLSGGDHIHAGTVVGKLEGERDITLGFVDLLRDDYTEIDANRGIYFTQSWVSTPGVLPVASGGIHVWHMPALTEIFGDDSVLQFGGGTLGHPWGNAPGAVANRVALEACVQARNEGRDLAREGNTIIREASKWSPELAAACEVWKEIKFEFPAVDTLDKDKKKG.

Positions 1–2 (MS) are excised as a propeptide. At proline 3 the chain carries N-acetylproline. Lysine 14 is modified (N6,N6,N6-trimethyllysine). Substrate contacts are provided by asparagine 123 and threonine 173. Lysine 175 serves as the catalytic Proton acceptor. Lysine 177 serves as a coordination point for substrate. The Mg(2+) site is built by lysine 201, aspartate 203, and glutamate 204. N6-carboxylysine is present on lysine 201. Catalysis depends on histidine 294, which acts as the Proton acceptor. Arginine 295, histidine 327, and serine 379 together coordinate substrate.

The protein belongs to the RuBisCO large chain family. Type I subfamily. Heterohexadecamer of 8 large chains and 8 small chains; disulfide-linked. The disulfide link is formed within the large subunit homodimers. It depends on Mg(2+) as a cofactor. The disulfide bond which can form in the large chain dimeric partners within the hexadecamer appears to be associated with oxidative stress and protein turnover.

It is found in the plastid. The protein resides in the chloroplast. It carries out the reaction 2 (2R)-3-phosphoglycerate + 2 H(+) = D-ribulose 1,5-bisphosphate + CO2 + H2O. It catalyses the reaction D-ribulose 1,5-bisphosphate + O2 = 2-phosphoglycolate + (2R)-3-phosphoglycerate + 2 H(+). In terms of biological role, ruBisCO catalyzes two reactions: the carboxylation of D-ribulose 1,5-bisphosphate, the primary event in carbon dioxide fixation, as well as the oxidative fragmentation of the pentose substrate in the photorespiration process. Both reactions occur simultaneously and in competition at the same active site. The polypeptide is Ribulose bisphosphate carboxylase large chain (Stegnosperma halimifolium).